Here is a 329-residue protein sequence, read N- to C-terminus: Ubiquitin carboxyl-terminal hydrolase isozyme L5 (329 aa).

Residues 7–225 form the UCH catalytic domain; it reads EWCLMESDPG…IRFNLMAIVS (219 aa). N6-succinyllysine is present on Lys-47. Cys-88 (nucleophile) is an active-site residue. Position 158 is an N6-acetyllysine (Lys-158). The active-site Proton donor is the His-164. Position 289 is an N6-succinyllysine (Lys-289). In terms of domain architecture, ULD spans 291–319; that stretch reads NYLPFIMELLKTLAEHQQLIPLVEKAKEK. Residues 313 to 329 form an interaction with ADRM1 region; that stretch reads VEKAKEKQNAKKAQETK.

The protein belongs to the peptidase C12 family. As to quaternary structure, component of the 19S (PA700) regulatory complex of the 26S proteasome. Interacts with ADRM1 and NFRKB; in vitro ADRM1 and NFRKB compete for interaction with UCHL5. Component of the INO80 complex; specifically part of a complex module associated with N-terminus of INO80.

It is found in the cytoplasm. The protein resides in the nucleus. It catalyses the reaction Thiol-dependent hydrolysis of ester, thioester, amide, peptide and isopeptide bonds formed by the C-terminal Gly of ubiquitin (a 76-residue protein attached to proteins as an intracellular targeting signal).. Its activity is regulated as follows. Activated by ADRM1. Inhibited by interaction with NFRKB. Functionally, protease that specifically cleaves 'Lys-48'-linked polyubiquitin chains. Deubiquitinating enzyme associated with the 19S regulatory subunit of the 26S proteasome. Putative regulatory component of the INO80 complex; however is inactive in the INO80 complex and is activated by a transient interaction of the INO80 complex with the proteasome via ADRM1. The protein is Ubiquitin carboxyl-terminal hydrolase isozyme L5 (UCHL5) of Homo sapiens (Human).